Consider the following 201-residue polypeptide: MGNVMEGKSVEELSSTECHQWYKKFMTECPSGQLTLYEFRQFFGLKNLSPSASQYVEQMFETFDFNKDGYIDFMEYVAALSLVLKGKVEQKLRWYFKLYDVDGNGCIDRDELLTIIQAIRAINPCSDTTMTAEEFTDTVFSKIDVNGDGELSLEEFIEGVQKDQMLLDTLTRSLDLTRIVRRLQNGEQDEEGADEAAEAAG.

Glycine 2 carries the N-myristoyl glycine lipid modification. A Deamidated asparagine modification is found at asparagine 3. EF-hand domains follow at residues 31–49 (SGQL…KNLS), 51–86 (SASQ…VLKG), 87–122 (KVEQ…IRAI), and 131–166 (TAEE…DQML). Ca(2+) is bound by residues aspartate 64, asparagine 66, aspartate 68, tyrosine 70, glutamate 75, aspartate 100, aspartate 102, asparagine 104, cysteine 106, glutamate 111, aspartate 144, asparagine 146, aspartate 148, glutamate 150, and glutamate 155.

In terms of assembly, homodimer. As to expression, in the retina, it is expressed in rod and cone photoreceptors.

Its subcellular location is the membrane. It is found in the photoreceptor inner segment. The protein localises to the cell projection. It localises to the cilium. The protein resides in the photoreceptor outer segment. Stimulates retinal guanylyl cyclase when free calcium ions concentration is low and inhibits guanylyl cyclase when free calcium ions concentration is elevated. This Ca(2+)-sensitive regulation of retinal guanylyl cyclase is a key event in recovery of the dark state of rod photoreceptors following light exposure. May be involved in cone photoreceptor light response and recovery of response in bright light. In Homo sapiens (Human), this protein is Guanylyl cyclase-activating protein 1 (GUCA1A).